The primary structure comprises 132 residues: ATP synthase epsilon chain (132 aa).

This sequence belongs to the ATPase epsilon chain family. As to quaternary structure, F-type ATPases have 2 components, CF(1) - the catalytic core - and CF(0) - the membrane proton channel. CF(1) has five subunits: alpha(3), beta(3), gamma(1), delta(1), epsilon(1). CF(0) has three main subunits: a, b and c.

The protein resides in the cell membrane. In terms of biological role, produces ATP from ADP in the presence of a proton gradient across the membrane. The protein is ATP synthase epsilon chain of Bacillus velezensis (strain DSM 23117 / BGSC 10A6 / LMG 26770 / FZB42) (Bacillus amyloliquefaciens subsp. plantarum).